A 101-amino-acid polypeptide reads, in one-letter code: Small ribosomal subunit protein uS14 (101 aa).

Belongs to the universal ribosomal protein uS14 family. In terms of assembly, part of the 30S ribosomal subunit. Contacts proteins S3 and S10.

Its function is as follows. Binds 16S rRNA, required for the assembly of 30S particles and may also be responsible for determining the conformation of the 16S rRNA at the A site. In Buchnera aphidicola subsp. Acyrthosiphon pisum (strain APS) (Acyrthosiphon pisum symbiotic bacterium), this protein is Small ribosomal subunit protein uS14.